The primary structure comprises 232 residues: GDT1-like protein 5 (232 aa).

6 helical membrane-spanning segments follow: residues 13–33 (LAMT…AILA), 40–60 (LVLA…VSLG), 72–92 (THHV…WEGF), 135–155 (PFVL…TFFG), 175–195 (FGVV…AVMG), and 207–227 (MVGL…YLSG).

The protein belongs to the GDT1 family.

The protein resides in the membrane. This chain is GDT1-like protein 5, found in Oryza sativa subsp. japonica (Rice).